The sequence spans 263 residues: Gap junction beta-6 protein (263 aa).

Topologically, residues 1–19 (MDWGALQTILGGVNKHSTS) are cytoplasmic. A helical membrane pass occupies residues 20–40 (IGKIWLTVLFIFRIMILVVAA). Residues 41-75 (ERVWGDEQDDFICNTLQPGCKNVCYDHFFPISHIR) are Extracellular-facing. The helical transmembrane segment at 76 to 96 (LWALQLIFVSTPALLVAMHVA) threads the bilayer. At 97–137 (YRRHEKKRQFRKGDQKCEYKDIEEIRTQRFRIEGTLWWTYT) the chain is on the cytoplasmic side. A helical membrane pass occupies residues 138–158 (CSIFFRLVFEAVFMYAFYFMY). The Extracellular segment spans residues 159–189 (DGFRMPRLMKCSAWPCPNTVDCFVSRPTEKT). A helical transmembrane segment spans residues 190-210 (VFTIFMIAVSSICILLNVAEL). The Cytoplasmic segment spans residues 211-263 (CYLLTKFFLRRSRKAGNQKHHPNHENKEETKQNEMNELISDSCQNTVIGFTSS).

Belongs to the connexin family. Beta-type (group I) subfamily. As to quaternary structure, a connexon is composed of a hexamer of connexins. In terms of tissue distribution, exclusively expressed in the cochlea of the inner ear, where it is found in cells of the tegmentum vasculosum, cuboidal cells, supporting cells and clear cells.

It is found in the cell membrane. The protein localises to the cell junction. Its subcellular location is the gap junction. In terms of biological role, one gap junction consists of a cluster of closely packed pairs of transmembrane channels, the connexons, through which materials of low MW diffuse from one cell to a neighboring cell. This Gallus gallus (Chicken) protein is Gap junction beta-6 protein (GJB6).